Reading from the N-terminus, the 500-residue chain is Glycerol kinase (500 aa).

Thr11 serves as a coordination point for ADP. Thr11, Thr12, and Ser13 together coordinate ATP. Thr11 contacts sn-glycerol 3-phosphate. ADP is bound at residue Arg15. Arg81, Glu82, Tyr133, and Asp242 together coordinate sn-glycerol 3-phosphate. 5 residues coordinate glycerol: Arg81, Glu82, Tyr133, Asp242, and Gln243. Thr264 and Gly307 together coordinate ADP. Thr264, Gly307, Gln311, and Gly411 together coordinate ATP. Gly411 contacts ADP.

It belongs to the FGGY kinase family.

The catalysed reaction is glycerol + ATP = sn-glycerol 3-phosphate + ADP + H(+). It functions in the pathway polyol metabolism; glycerol degradation via glycerol kinase pathway; sn-glycerol 3-phosphate from glycerol: step 1/1. Inhibited by fructose 1,6-bisphosphate (FBP). Key enzyme in the regulation of glycerol uptake and metabolism. Catalyzes the phosphorylation of glycerol to yield sn-glycerol 3-phosphate. This is Glycerol kinase from Rhodopseudomonas palustris (strain ATCC BAA-98 / CGA009).